Reading from the N-terminus, the 2303-residue chain is Adenomatous polyposis coli protein 2 (2303 aa).

Positions 8-59 (YEQLVRQVEALKAENSHLRQELRDNSSHLSKLETETSGMKEVLKHLQGKLEQ) form a coiled coil. Disordered stretches follow at residues 94-120 (PTLG…KDSF) and 247-270 (VPVD…QPGN). ARM repeat units follow at residues 302–341 (PESC…PGAK), 479–518 (ANKA…NLSW), 522–562 (INSK…NLSA), 566–609 (ENKA…NVSS), 615–654 (EDYR…NLSA), and 657–696 (ARDQ…NLLA). 2 disordered regions span residues 744 to 764 (KQGP…LRHL) and 816 to 835 (LART…DTSG). Residues 825-834 (GGKEAEKDTS) show a composition bias toward basic and acidic residues. Residues 840–864 (AAKAKAKLALAVARIDQLVEDISAL) adopt a coiled-coil conformation. Disordered regions lie at residues 867–908 (SSDD…AGSR), 953–986 (RRED…ATSA), 1069–1152 (RCSS…ENYV), and 1173–1228 (SPSI…EATQ). A compositionally biased stretch (low complexity) spans 869–878 (DDSFSLSSGD). The stretch at 1058–1077 (LAAQEGPLSLSRCSSLSSLS) is repeat 1. Positions 1058 to 1587 (LAAQEGPLSL…SLSSSASSLS (530 aa)) are 5 X 20 AA approximate repeat of F-X-V-E-X-T-P-X-C-F-S-R-X-S-S-L-S-S-L-S. The interval 1058–1587 (LAAQEGPLSL…SLSSSASSLS (530 aa)) is interaction with CTNNB1. Over residues 1069-1084 (RCSSLSSLSSAGRPGP) the composition is skewed to low complexity. Over residues 1088–1101 (GDLDDSDSSLEGLE) the composition is skewed to acidic residues. Residues 1143 to 1152 (TPSSSSENYV) show a composition bias toward polar residues. Residues 1150–1169 (NYVQETPLVLSRCSSVSSLG) form repeat 2. Low complexity predominate over residues 1173-1186 (SPSIASSIPSEPCS). Polar residues predominate over residues 1202–1212 (PGQTMPPSRSK). The stretch at 1263 to 1282 (FTVEKPDENFSCASSLSALA) is repeat 3. 5 disordered regions span residues 1307-1335 (GAGG…PRGA), 1382-1497 (PAQE…QSLC), 1510-1684 (YGND…LDSV), 1724-2031 (LSVG…RGRP), and 2046-2232 (LRAA…DVDG). Residues 1390-1410 (TDSAEGTPVNFSSAASLSDET) show a composition bias toward polar residues. The stretch at 1391–1410 (DSAEGTPVNFSSAASLSDET) is repeat 4. Composition is skewed to basic and acidic residues over residues 1477–1489 (ADKD…RTRG) and 1537–1548 (FTRERPQGRKEA). The stretch at 1568–1587 (LIADETPPCYSLSSSASSLS) is repeat 5. Residues 1578–1589 (SLSSSASSLSEP) are compositionally biased toward low complexity. Serine 1585 and serine 1587 each carry phosphoserine. The span at 1638-1654 (PRRRPPVSGLRRRKPRA) shows a compositional bias: basic residues. Basic and acidic residues-rich tracts occupy residues 1655–1671 (TRLD…RGEE) and 1739–1755 (RQAE…EKRG). Residues 1819-1830 (APPCLAQPAAPA) show a composition bias toward low complexity. The interval 1821-1900 (PCLAQPAAPA…PPVTQAAGAL (80 aa)) is required for localization to microtubules and function in microtubule stabilization. Polar residues predominate over residues 1851–1860 (ELATLSQPPR). Low complexity-rich tracts occupy residues 1868-1886 (LAKT…SQPL), 1971-1984 (GLVR…SGSE), 2011-2026 (LSSA…GASP), 2049-2062 (APRQ…QRPP), and 2113-2123 (GAVPAAPASAD). The segment at 2067-2144 (SPGERPARRT…PLPRVAAPGT (78 aa)) is interaction with MAPRE1 and MAPRE3. The span at 2124 to 2135 (AARRSSDGEPRP) shows a compositional bias: basic and acidic residues. Positions 2200-2209 (KTNSSTSPSL) are enriched in polar residues.

Belongs to the adenomatous polyposis coli (APC) family. Interacts with PSRC1. Interacts with APC. Interacts with CTNNB1. Interacts with MAPRE1 and MAPRE3. Interacts with TP53BP. Interacts possibly with AXIN2. As to expression, widely expressed (at protein level). Specifically expressed in the CNS.

Its subcellular location is the cytoplasm. It localises to the cytoskeleton. It is found in the golgi apparatus. The protein localises to the perinuclear region. Its function is as follows. Stabilizes microtubules and may regulate actin fiber dynamics through the activation of Rho family GTPases. May also function in Wnt signaling by promoting the rapid degradation of CTNNB1. This Homo sapiens (Human) protein is Adenomatous polyposis coli protein 2.